The chain runs to 130 residues: Small ribosomal subunit protein uS8 (130 aa).

It belongs to the universal ribosomal protein uS8 family. As to quaternary structure, part of the 30S ribosomal subunit. Contacts proteins S5 and S12.

In terms of biological role, one of the primary rRNA binding proteins, it binds directly to 16S rRNA central domain where it helps coordinate assembly of the platform of the 30S subunit. The chain is Small ribosomal subunit protein uS8 from Nitrosococcus oceani (strain ATCC 19707 / BCRC 17464 / JCM 30415 / NCIMB 11848 / C-107).